A 356-amino-acid chain; its full sequence is Phosphatidylglycerol--prolipoprotein diacylglyceryl transferase (356 aa).

4 helical membrane passes run 24-44 (IKWYGIFITVGFVLAIILACV), 59-79 (WFVFIGIPVSLLGARIWSFII), 103-123 (LAIEGGVLLTVIAALIYFPLV), and 144-164 (VSMWVYADAIVPCILVGQIIG). Arg165 contributes to the a 1,2-diacyl-sn-glycero-3-phospho-(1'-sn-glycerol) binding site. Transmembrane regions (helical) follow at residues 209-229 (PFFLYESFINFWFFLAIYIGG) and 265-285 (FATSIVMSVLFALFGIILLVC).

This sequence belongs to the Lgt family.

Its subcellular location is the cell membrane. It carries out the reaction L-cysteinyl-[prolipoprotein] + a 1,2-diacyl-sn-glycero-3-phospho-(1'-sn-glycerol) = an S-1,2-diacyl-sn-glyceryl-L-cysteinyl-[prolipoprotein] + sn-glycerol 1-phosphate + H(+). The protein operates within protein modification; lipoprotein biosynthesis (diacylglyceryl transfer). Functionally, catalyzes the transfer of the diacylglyceryl group from phosphatidylglycerol to the sulfhydryl group of the N-terminal cysteine of a prolipoprotein, the first step in the formation of mature lipoproteins. This is Phosphatidylglycerol--prolipoprotein diacylglyceryl transferase from Malacoplasma penetrans (strain HF-2) (Mycoplasma penetrans).